The sequence spans 282 residues: Nucleotide-binding protein XAC2976 (282 aa).

5–12 (GLSGSGKS) is an ATP binding site. 57 to 60 (DVRS) provides a ligand contact to GTP.

This sequence belongs to the RapZ-like family.

Functionally, displays ATPase and GTPase activities. This is Nucleotide-binding protein XAC2976 from Xanthomonas axonopodis pv. citri (strain 306).